Reading from the N-terminus, the 252-residue chain is 4-hydroxy-tetrahydrodipicolinate reductase (252 aa).

NAD(+) is bound by residues 8–13 (GCSGKM), 85–87 (CTT), and 109–112 (SANM). His142 (proton donor/acceptor) is an active-site residue. A (S)-2,3,4,5-tetrahydrodipicolinate-binding site is contributed by His143. The active-site Proton donor is the Lys146. Residue 152–153 (GT) participates in (S)-2,3,4,5-tetrahydrodipicolinate binding.

Belongs to the DapB family.

Its subcellular location is the cytoplasm. The catalysed reaction is (S)-2,3,4,5-tetrahydrodipicolinate + NAD(+) + H2O = (2S,4S)-4-hydroxy-2,3,4,5-tetrahydrodipicolinate + NADH + H(+). The enzyme catalyses (S)-2,3,4,5-tetrahydrodipicolinate + NADP(+) + H2O = (2S,4S)-4-hydroxy-2,3,4,5-tetrahydrodipicolinate + NADPH + H(+). It functions in the pathway amino-acid biosynthesis; L-lysine biosynthesis via DAP pathway; (S)-tetrahydrodipicolinate from L-aspartate: step 4/4. Its function is as follows. Catalyzes the conversion of 4-hydroxy-tetrahydrodipicolinate (HTPA) to tetrahydrodipicolinate. The sequence is that of 4-hydroxy-tetrahydrodipicolinate reductase from Clostridium novyi (strain NT).